We begin with the raw amino-acid sequence, 133 residues long: MSWQAYVDEHLMCDIDGQGQQLAASAIVGHDGSVWAQSSSFPQLKPEEITGIMKDFDEPGHLAPTGLHLGGTKYMVIQGEAGAVIRGKKGSGGITIKKTGQALVFGIYEEPVTPGQCNMVVERLGDYLAEQGL.

A disulfide bridge connects residues C13 and C117. The Involved in PIP2 interaction signature appears at 83-99 (AVIRGKKGSGGITIKKT). Residue T113 is modified to Phosphothreonine.

It belongs to the profilin family. As to quaternary structure, occurs in many kinds of cells as a complex with monomeric actin in a 1:1 ratio. Phosphorylated by MAP kinases.

Its subcellular location is the cytoplasm. The protein resides in the cytoskeleton. Its function is as follows. Binds to actin and affects the structure of the cytoskeleton. At high concentrations, profilin prevents the polymerization of actin, whereas it enhances it at low concentrations. The protein is Profilin-2 of Corylus avellana (European hazel).